Here is a 255-residue protein sequence, read N- to C-terminus: tRNA (guanine-N(1)-)-methyltransferase (255 aa).

S-adenosyl-L-methionine is bound by residues Gly-117 and 137–142 (LGDFVL).

This sequence belongs to the RNA methyltransferase TrmD family. Homodimer.

The protein resides in the cytoplasm. It carries out the reaction guanosine(37) in tRNA + S-adenosyl-L-methionine = N(1)-methylguanosine(37) in tRNA + S-adenosyl-L-homocysteine + H(+). Functionally, specifically methylates guanosine-37 in various tRNAs. The protein is tRNA (guanine-N(1)-)-methyltransferase of Paraburkholderia phytofirmans (strain DSM 17436 / LMG 22146 / PsJN) (Burkholderia phytofirmans).